We begin with the raw amino-acid sequence, 247 residues long: PF03932 family protein CutC (247 aa).

It belongs to the CutC family.

The protein localises to the cytoplasm. In Enterobacter sp. (strain 638), this protein is PF03932 family protein CutC.